The chain runs to 130 residues: Small ribosomal subunit protein uS9 (130 aa).

The segment at 105-130 (TRDPRMKERKKYGLKGARRAPQFSKR) is disordered. Positions 111 to 130 (KERKKYGLKGARRAPQFSKR) are enriched in basic residues.

This sequence belongs to the universal ribosomal protein uS9 family.

The sequence is that of Small ribosomal subunit protein uS9 from Bacillus pumilus (strain SAFR-032).